The following is a 79-amino-acid chain: uncharacterized protein (79 aa).

This is an uncharacterized protein from Haemophilus influenzae (strain ATCC 51907 / DSM 11121 / KW20 / Rd).